The sequence spans 149 residues: Probable ubiquitin-conjugating enzyme E2 12 (149 aa).

Positions 1–15 (MASKRISRELRDMQR) are enriched in basic and acidic residues. The interval 1–22 (MASKRISRELRDMQRHPPANCS) is disordered. A UBC core domain is found at 1–148 (MASKRISREL…AQKWTQKYAM (148 aa)). C86 serves as the catalytic Glycyl thioester intermediate.

It belongs to the ubiquitin-conjugating enzyme family. Ubiquitously expressed at very low levels.

The catalysed reaction is S-ubiquitinyl-[E1 ubiquitin-activating enzyme]-L-cysteine + [E2 ubiquitin-conjugating enzyme]-L-cysteine = [E1 ubiquitin-activating enzyme]-L-cysteine + S-ubiquitinyl-[E2 ubiquitin-conjugating enzyme]-L-cysteine.. It participates in protein modification; protein ubiquitination. Its function is as follows. Accepts the ubiquitin from the E1 complex and catalyzes its covalent attachment to other proteins. This chain is Probable ubiquitin-conjugating enzyme E2 12 (UBC12), found in Arabidopsis thaliana (Mouse-ear cress).